The chain runs to 278 residues: Complement component 1 Q subcomponent-binding protein, mitochondrial (278 aa).

The transit peptide at 1–70 directs the protein to the mitochondrion; it reads MLPLLRCVPR…PVPCACGCGA (70 aa). Positions 73 to 90 are C1q binding; that stretch reads TEGDKAFVEFLTDEIKEE. N6-acetyllysine occurs at positions 88 and 91. The interval 133 to 162 is disordered; it reads NNSIPPTFDGEEEPSQGQKAEEQEPERTST. An interaction with MAVS region spans residues 165–209; that stretch reads FVVEVTKTDGKKTLVLDCHYPEDEIGHEDEAESDIFSIKEVSFQA. The residue at position 184 (Tyr-184) is a Phosphotyrosine. A phosphoserine mark is found at Ser-197 and Ser-201. The residue at position 210 (Thr-210) is a Phosphothreonine.

The protein belongs to the MAM33 family. In terms of assembly, homotrimer; three monomers form a donut-shaped structure with an unusually asymmetric charge distribution on the surface. Interacts with CDK13, HRK, VTN, NFYB, ADRA1B, FOXC1, DDX21, DDX50, NCL, SRSF1 and SRSF9. Interacts with CD93; the association may represent a cell surface C1q receptor. Interacts with KRT1; the association represents a cell surface kininogen receptor. Interacts with CD209; the interaction is indicative for a C1q:C1QBP:CD209 signaling complex. Interacts with FBL and RRP1; the respective interactions with C1QBP are competitive. Probably associates with the mitoribosome. Interacts with MAVS; the interaction occurs upon viral transfection. Interacts with PPIF. Interacts with U2AF1L4. Interacts with PLEKHN1. Interacts with VGF-derived peptide TLQP-21. Interacts with MRE11 and RAD50; forming the MRC (MRE11-RAD50-C1QBP) complex that inhibits the activity of MRE11. Ubiquitous.

Its subcellular location is the mitochondrion matrix. It localises to the nucleus. The protein resides in the cell membrane. The protein localises to the secreted. It is found in the cytoplasm. Its subcellular location is the nucleolus. Its function is as follows. Is believed to be a multifunctional and multicompartmental protein involved in inflammation and infection processes, ribosome biogenesis, protein synthesis in mitochondria, regulation of apoptosis, transcriptional regulation and pre-mRNA splicing. At the cell surface is thought to act as an endothelial receptor for plasma proteins of the complement and kallikrein-kinin cascades. Putative receptor for C1q; specifically binds to the globular 'heads' of C1q thus inhibiting C1; may perform the receptor function through a complex with C1qR/CD93. In complex with cytokeratin-1/KRT1 is a high affinity receptor for kininogen-1/HMWK. Can also bind other plasma proteins, such as coagulation factor XII leading to its autoactivation. May function to bind initially fluid kininogen-1 to the cell membrane. The secreted form may enhance both extrinsic and intrinsic coagulation pathways. It is postulated that the cell surface form requires docking with transmembrane proteins for downstream signaling which might be specific for a cell-type or response. By acting as C1q receptor is involved in chemotaxis of immature dendritic cells and neutrophils and is proposed to signal through CD209/DC-SIGN on immature dendritic cells, through integrin alpha-4/beta-1 during trophoblast invasion of the decidua, and through integrin beta-1 during endothelial cell adhesion and spreading. Signaling involved in inhibition of innate immune response is implicating the PI3K-AKT/PKB pathway. Required for protein synthesis in mitochondria. In mitochondrial translation may be involved in formation of functional 55S mitoribosomes; the function seems to involve its RNA-binding activity. Acts as a RNA modification reader, which specifically recognizes and binds mitochondrial RNAs modified by C5-methylcytosine (m5C) in response to stress, and promotes recruitment of the mitochondrial degradosome complex, leading to their degradation. May be involved in the nucleolar ribosome maturation process; the function may involve the exchange of FBL for RRP1 in the association with pre-ribosome particles. Involved in regulation of RNA splicing by inhibiting the RNA-binding capacity of SRSF1 and its phosphorylation. Is required for the nuclear translocation of splicing factor U2AF1L4. Involved in regulation of CDKN2A- and HRK-mediated apoptosis. May be involved in regulation of FOXC1 transcriptional activity and NFY/CCAAT-binding factor complex-mediated transcription. May play a role in antibacterial defense. Acts as a regulator of DNA repair via homologous recombination by inhibiting the activity of MRE11: interacts with unphosphorylated MRE11 and RAD50 in absence of DNA damage, preventing formation and activity of the MRN complex. Following DNA damage, dissociates from phosphorylated MRE11, allowing formation of the MRN complex. In Mus musculus (Mouse), this protein is Complement component 1 Q subcomponent-binding protein, mitochondrial (C1qbp).